The chain runs to 63 residues: Cypmaclein (63 aa).

This sequence belongs to the GASA family. Expressed in pollen (at protein level).

The chain is Cypmaclein from Juniperus ashei (Ozark white cedar).